The chain runs to 799 residues: Protein phosphatase 1 regulatory subunit 3F (799 aa).

The segment at 1–30 is disordered; it reads MARTAPVEPPLRHPAPPSPAAGEPRASAEA. Residues 1–772 are Cytoplasmic-facing; sequence MARTAPVEPP…LTQTLGVLAG (772 aa). A compositionally biased stretch (pro residues) spans 7–19; it reads VEPPLRHPAPPSP. Residue Ser18 is modified to Phosphoserine. The segment covering 20-30 has biased composition (low complexity); the sequence is AAGEPRASAEA. A PP1-binding motif motif is present at residues 36-39; that stretch reads RVLF. Disordered regions lie at residues 53 to 108, 201 to 235, 332 to 353, and 417 to 439; these read RYRP…PVPA, SPPGAGVGGTGAGDPLLDPGLGLGPGQMSASSPDD, RRRPFEEEPRMRSADDNTLAEH, and ATCGLGGPPRDQASGPDASDRAA. A compositionally biased stretch (acidic residues) spans 78–97; the sequence is ADEEDDGEDGDEGEEEEEAF. Positions 127-283 constitute a CBM21 domain; that stretch reads LERLGRVMVE…NNHGRNYTVL (157 aa). Residues 334–353 show a composition bias toward basic and acidic residues; that stretch reads RPFEEEPRMRSADDNTLAEH. At Ser545 the chain carries Phosphoserine. Disordered regions lie at residues 566–600, 663–688, and 722–743; these read KDTEDPDDEGEGEDGLSITPSSPEGGSPKESPPEI, SKSPGEAGTESQMEELPTERESSWVP, and PHVNSQEEEGGSLNLESPKRSP. The span at 569–579 shows a compositional bias: acidic residues; it reads EDPDDEGEGED. Residues 585–594 are compositionally biased toward low complexity; that stretch reads PSSPEGGSPK. Ser587 and Ser592 each carry phosphoserine. Residues 679 to 688 are compositionally biased toward basic and acidic residues; that stretch reads PTERESSWVP. Residues 773–793 form a helical membrane-spanning segment; the sequence is LVMVPVALNSGVSLLVLVLCL. The Extracellular portion of the chain corresponds to 794–799; the sequence is SLAWFS.

Highly expressed in brain (at protein level).

Its subcellular location is the membrane. Its function is as follows. Glycogen-targeting subunit for protein phosphatase 1 (PP1). In Mus musculus (Mouse), this protein is Protein phosphatase 1 regulatory subunit 3F (Ppp1r3f).